The following is a 122-amino-acid chain: MIGVDIVKNERIKDALERFGDKFLDRIYTKRELEYCYAHCDFLPCLAARWAGKEAVLKAFYTEFKIFLRFKEIEILGNRGRPPTVVINREGVEEILKNYEVIVSLSHERDYSVAVAYIKKKS.

Residues D5 and E54 each coordinate Mg(2+).

This sequence belongs to the P-Pant transferase superfamily. AcpS family. The cofactor is Mg(2+).

Its subcellular location is the cytoplasm. It carries out the reaction apo-[ACP] + CoA = holo-[ACP] + adenosine 3',5'-bisphosphate + H(+). Its function is as follows. Transfers the 4'-phosphopantetheine moiety from coenzyme A to a Ser of acyl-carrier-protein. The chain is Holo-[acyl-carrier-protein] synthase from Aquifex aeolicus (strain VF5).